Reading from the N-terminus, the 1348-residue chain is Putative late blight resistance protein homolog R1B-12 (1348 aa).

Coiled coils occupy residues Arg-446–Gln-469 and Pro-561–Asn-583. One can recognise an NB-ARC domain in the interval Arg-552 to Glu-848. Residue Gly-595–Thr-602 participates in ATP binding. LRR repeat units lie at residues Phe-977–Leu-1001, Leu-1051–Leu-1074, Pro-1123–Gln-1147, Tyr-1151–His-1170, Leu-1171–Asn-1194, Phe-1197–Ala-1219, Phe-1220–Ile-1244, and Leu-1309–Ala-1332. An HMA domain is found at Val-1284–Leu-1348.

It belongs to the disease resistance NB-LRR family.

It is found in the cytoplasm. The protein localises to the membrane. Its function is as follows. Confers resistance to late blight (Phytophthora infestans) races carrying the avirulence gene Avr1. Resistance proteins guard the plant against pathogens that contain an appropriate avirulence protein via an indirect interaction with this avirulence protein. That triggers a defense system including the hypersensitive response, which restricts the pathogen growth. This Solanum demissum (Wild potato) protein is Putative late blight resistance protein homolog R1B-12 (R1B-12).